We begin with the raw amino-acid sequence, 225 residues long: UPF0758 protein Sfri_3828 (225 aa).

One can recognise an MPN domain in the interval 102–224 (ILTNPDLTRD…IVSFAERGWI (123 aa)). Positions 173, 175, and 186 each coordinate Zn(2+). Positions 173–186 (HNHPSGIAEPSQAD) match the JAMM motif motif.

Belongs to the UPF0758 family.

This chain is UPF0758 protein Sfri_3828, found in Shewanella frigidimarina (strain NCIMB 400).